The chain runs to 396 residues: Ribosomal RNA large subunit methyltransferase I (396 aa).

The 78-residue stretch at 2-79 (AVRIKLKPGR…REEEIDREFF (78 aa)) folds into the PUA domain.

The protein belongs to the methyltransferase superfamily. RlmI family.

Its subcellular location is the cytoplasm. It catalyses the reaction cytidine(1962) in 23S rRNA + S-adenosyl-L-methionine = 5-methylcytidine(1962) in 23S rRNA + S-adenosyl-L-homocysteine + H(+). Its function is as follows. Specifically methylates the cytosine at position 1962 (m5C1962) of 23S rRNA. The protein is Ribosomal RNA large subunit methyltransferase I of Shewanella sp. (strain MR-7).